We begin with the raw amino-acid sequence, 469 residues long: Glutamate--tRNA ligase (469 aa).

The short motif at 9 to 19 (PSPTGYLHVGG) is the 'HIGH' region element. Zn(2+) is bound by residues C98, C100, C125, and D127. The short motif at 237–241 (KLSKR) is the 'KMSKS' region element. K240 is a binding site for ATP.

Belongs to the class-I aminoacyl-tRNA synthetase family. Glutamate--tRNA ligase type 1 subfamily. In terms of assembly, monomer. Requires Zn(2+) as cofactor.

It localises to the cytoplasm. It carries out the reaction tRNA(Glu) + L-glutamate + ATP = L-glutamyl-tRNA(Glu) + AMP + diphosphate. Its function is as follows. Catalyzes the attachment of glutamate to tRNA(Glu) in a two-step reaction: glutamate is first activated by ATP to form Glu-AMP and then transferred to the acceptor end of tRNA(Glu). This Erwinia tasmaniensis (strain DSM 17950 / CFBP 7177 / CIP 109463 / NCPPB 4357 / Et1/99) protein is Glutamate--tRNA ligase.